A 165-amino-acid polypeptide reads, in one-letter code: UPF0114 protein in repA1-repA2 intergenic region (165 aa).

Transmembrane regions (helical) follow at residues 10 to 32 (YASR…LLTL), 53 to 75 (LVLV…MVMF), and 134 to 156 (DQIM…MACI).

This sequence belongs to the UPF0114 family.

The protein localises to the cell membrane. This Buchnera aphidicola subsp. Baizongia pistaciae (strain Bp) protein is UPF0114 protein in repA1-repA2 intergenic region.